The primary structure comprises 246 residues: Bis(5'-nucleosyl)-tetraphosphatase PrpE [asymmetrical] (246 aa).

The protein belongs to the PrpE family. It depends on Ni(2+) as a cofactor.

The enzyme catalyses P(1),P(4)-bis(5'-guanosyl) tetraphosphate + H2O = GMP + GTP + 2 H(+). In terms of biological role, asymmetrically hydrolyzes Ap4p to yield AMP and ATP. The protein is Bis(5'-nucleosyl)-tetraphosphatase PrpE [asymmetrical] of Bacillus mycoides (strain KBAB4) (Bacillus weihenstephanensis).